We begin with the raw amino-acid sequence, 677 residues long: UvrABC system protein B (677 aa).

A Helicase ATP-binding domain is found at 25–412; that stretch reads QGVNGGERYQ…GGEVAQQVIR (388 aa). 38 to 45 is a binding site for ATP; sequence GATGTGKT. The Beta-hairpin signature appears at 91 to 114; it reads YYDYYQPEAYVPVSDTYIAKTASI. The region spanning 429–591 is the Helicase C-terminal domain; the sequence is QVDDLLGEIR…IVPTAAGKKA (163 aa). The 36-residue stretch at 639–674 folds into the UVR domain; the sequence is PELIDQLEGKMKEAAKKLDFEDAANLRDRIKQLRQK.

The protein belongs to the UvrB family. As to quaternary structure, forms a heterotetramer with UvrA during the search for lesions. Interacts with UvrC in an incision complex.

The protein resides in the cytoplasm. The UvrABC repair system catalyzes the recognition and processing of DNA lesions. A damage recognition complex composed of 2 UvrA and 2 UvrB subunits scans DNA for abnormalities. Upon binding of the UvrA(2)B(2) complex to a putative damaged site, the DNA wraps around one UvrB monomer. DNA wrap is dependent on ATP binding by UvrB and probably causes local melting of the DNA helix, facilitating insertion of UvrB beta-hairpin between the DNA strands. Then UvrB probes one DNA strand for the presence of a lesion. If a lesion is found the UvrA subunits dissociate and the UvrB-DNA preincision complex is formed. This complex is subsequently bound by UvrC and the second UvrB is released. If no lesion is found, the DNA wraps around the other UvrB subunit that will check the other stand for damage. The chain is UvrABC system protein B from Parasynechococcus marenigrum (strain WH8102).